Here is a 466-residue protein sequence, read N- to C-terminus: Argininosuccinate lyase (466 aa).

Belongs to the lyase 1 family. Argininosuccinate lyase subfamily.

The protein localises to the cytoplasm. The enzyme catalyses 2-(N(omega)-L-arginino)succinate = fumarate + L-arginine. The protein operates within amino-acid biosynthesis; L-arginine biosynthesis; L-arginine from L-ornithine and carbamoyl phosphate: step 3/3. The polypeptide is Argininosuccinate lyase (Clostridium perfringens (strain ATCC 13124 / DSM 756 / JCM 1290 / NCIMB 6125 / NCTC 8237 / Type A)).